Reading from the N-terminus, the 277-residue chain is Alpha carbonic anhydrase 5 (277 aa).

A signal peptide spans 1-22 (MKIPSIGYVFFLIFISITIVSS). Residues 33–269 (TQFNYEKKGE…KNERPVALYI (237 aa)) form the Alpha-carbonic anhydrase domain. An intrachain disulfide couples Cys58 to Cys219. A glycan (N-linked (GlcNAc...) asparagine) is linked at Asn91. Catalysis depends on His99, which acts as the Proton acceptor. The N-linked (GlcNAc...) asparagine glycan is linked to Asn117. Zn(2+) contacts are provided by His127, His129, and His146. A substrate-binding site is contributed by 215 to 216 (TT).

The protein belongs to the alpha-class carbonic anhydrase family. It depends on Zn(2+) as a cofactor. In terms of processing, N-glycosylated.

It localises to the plastid. The protein localises to the chloroplast stroma. It carries out the reaction hydrogencarbonate + H(+) = CO2 + H2O. Its function is as follows. Reversible hydration of carbon dioxide. In Arabidopsis thaliana (Mouse-ear cress), this protein is Alpha carbonic anhydrase 5 (ACA5).